Consider the following 298-residue polypeptide: Ribosomal protein L11 methyltransferase (298 aa).

4 residues coordinate S-adenosyl-L-methionine: T139, G163, D185, and N232.

It belongs to the methyltransferase superfamily. PrmA family.

It is found in the cytoplasm. It catalyses the reaction L-lysyl-[protein] + 3 S-adenosyl-L-methionine = N(6),N(6),N(6)-trimethyl-L-lysyl-[protein] + 3 S-adenosyl-L-homocysteine + 3 H(+). In terms of biological role, methylates ribosomal protein L11. The sequence is that of Ribosomal protein L11 methyltransferase from Microcystis aeruginosa (strain NIES-843 / IAM M-2473).